Here is a 292-residue protein sequence, read N- to C-terminus: 4-hydroxy-tetrahydrodipicolinate synthase (292 aa).

Threonine 45 is a pyruvate binding site. Tyrosine 133 (proton donor/acceptor) is an active-site residue. Lysine 161 serves as the catalytic Schiff-base intermediate with substrate. A pyruvate-binding site is contributed by isoleucine 203.

This sequence belongs to the DapA family. In terms of assembly, homotetramer; dimer of dimers.

The protein localises to the cytoplasm. The enzyme catalyses L-aspartate 4-semialdehyde + pyruvate = (2S,4S)-4-hydroxy-2,3,4,5-tetrahydrodipicolinate + H2O + H(+). It participates in amino-acid biosynthesis; L-lysine biosynthesis via DAP pathway; (S)-tetrahydrodipicolinate from L-aspartate: step 3/4. Its function is as follows. Catalyzes the condensation of (S)-aspartate-beta-semialdehyde [(S)-ASA] and pyruvate to 4-hydroxy-tetrahydrodipicolinate (HTPA). The sequence is that of 4-hydroxy-tetrahydrodipicolinate synthase from Herminiimonas arsenicoxydans.